Consider the following 125-residue polypeptide: Ribonuclease pancreatic (125 aa).

Residues Lys7 and Arg10 each contribute to the substrate site. The active-site Proton acceptor is the His12. 4 cysteine pairs are disulfide-bonded: Cys27-Cys85, Cys41-Cys96, Cys59-Cys111, and Cys66-Cys73. A glycan (N-linked (GlcNAc...) asparagine) is linked at Asn35. Substrate contacts are provided by residues 42–46 (KPVNT), Lys67, and Arg86. The active-site Proton donor is the His120.

This sequence belongs to the pancreatic ribonuclease family. Monomer. Interacts with and forms tight 1:1 complexes with RNH1. Dimerization of two such complexes may occur. Interaction with RNH1 inhibits this protein. Pancreas.

It is found in the secreted. The catalysed reaction is an [RNA] containing cytidine + H2O = an [RNA]-3'-cytidine-3'-phosphate + a 5'-hydroxy-ribonucleotide-3'-[RNA].. It carries out the reaction an [RNA] containing uridine + H2O = an [RNA]-3'-uridine-3'-phosphate + a 5'-hydroxy-ribonucleotide-3'-[RNA].. Endonuclease that catalyzes the cleavage of RNA on the 3' side of pyrimidine nucleotides. Acts on single-stranded and double-stranded RNA. The chain is Ribonuclease pancreatic (RNASE1) from Spalax ehrenbergi (Middle East blind mole rat).